The sequence spans 304 residues: D-alanine--D-alanine ligase (304 aa).

Residues 103 to 299 (KLIWQALGLP…FADLCIEILK (197 aa)) form the ATP-grasp domain. 129–184 (EEKLGLPMFVKPAAEGSSVGVVKVKGKGRLKSVYEELKHLQGEIIAERFIGGGEYS) serves as a coordination point for ATP. The Mg(2+) site is built by aspartate 253, glutamate 266, and asparagine 268.

It belongs to the D-alanine--D-alanine ligase family. It depends on Mg(2+) as a cofactor. Requires Mn(2+) as cofactor.

The protein localises to the cytoplasm. It carries out the reaction 2 D-alanine + ATP = D-alanyl-D-alanine + ADP + phosphate + H(+). The protein operates within cell wall biogenesis; peptidoglycan biosynthesis. In terms of biological role, cell wall formation. The chain is D-alanine--D-alanine ligase from Neisseria meningitidis serogroup B (strain ATCC BAA-335 / MC58).